Consider the following 331-residue polypeptide: Neurogenic differentiation factor 4 (331 aa).

The disordered stretch occupies residues 1–80; the sequence is MSKTFVKSKE…GPKKKKMTKA (80 aa). The span at 52–64 shows a compositional bias: acidic residues; that stretch reads DSIEEEEEEEEDG. A compositionally biased stretch (basic residues) spans 67 to 79; the sequence is PKRRGPKKKKMTK. Residues 87–139 form the bHLH domain; it reads ARRVKANARERTRMHGLNDALDNLRRVMPCYSKTQKLSKIETLRLARNYIWAL. A disordered region spans residues 246–265; it reads TPPYEGPLTPPLSISGNFSL.

In terms of assembly, efficient DNA binding requires dimerization with another bHLH protein. In terms of processing, serine or threonine phosphorylation within the basic region may regulate neurogenic activity.

It localises to the nucleus. Its function is as follows. Probably acts as a transcriptional activator. Mediates neuronal differentiation. Required for the regulation of amacrine cell fate specification in the retina. In Homo sapiens (Human), this protein is Neurogenic differentiation factor 4 (NEUROD4).